The following is a 704-amino-acid chain: Urea-proton symporter DUR3 (704 aa).

15 helical membrane-spanning segments follow: residues 39-59, 80-100, 115-135, 159-179, 192-212, 216-236, 291-311, 336-356, 388-408, 435-455, 461-481, 486-506, 527-547, 590-610, and 622-642; these read YAVI…LVWL, VKTG…ATIL, FWYA…AIEI, IVFL…LLLG, LYAA…AGGL, FLAS…FVFL, SSGG…TVFV, LVWF…ALAL, LTML…AVSS, AVLG…KAGV, YLAM…MLLW, AFGA…TWLT, LAGN…CSLV, AWIV…WPVL, and FWFW…VIIG.

The protein belongs to the sodium:solute symporter (SSF) (TC 2.A.21) family. As to expression, expressed in root rhizodermis, including root hairs and cortex in more basal root zones. Expressed in shoots.

The protein localises to the cell membrane. High-affinity urea-proton symporter involved in the active transport of urea across the plasma membrane into root cells. May play an important role in urea uptake by plant cells at low external urea concentrations. The protein is Urea-proton symporter DUR3 (DUR3) of Arabidopsis thaliana (Mouse-ear cress).